Consider the following 586-residue polypeptide: Phosphomethylpyrimidine synthase (586 aa).

Positions 1 to 58 (MKQSVSAEQIELKSSLPGSKKVYVDGPREGMKVPMREIEQSDTNGVPNPPIRVYDTSG) are disordered. Residues 22 to 39 (VYVDGPREGMKVPMREIE) show a composition bias toward basic and acidic residues. Substrate is bound by residues Asn193, Met222, Tyr251, His287, 307 to 309 (SRG), 348 to 351 (DGLR), and Glu387. His391 is a binding site for Zn(2+). A substrate-binding site is contributed by Tyr414. Residue His455 coordinates Zn(2+). Residues Cys535, Cys538, and Cys543 each contribute to the [4Fe-4S] cluster site.

The protein belongs to the ThiC family. Requires [4Fe-4S] cluster as cofactor.

The enzyme catalyses 5-amino-1-(5-phospho-beta-D-ribosyl)imidazole + S-adenosyl-L-methionine = 4-amino-2-methyl-5-(phosphooxymethyl)pyrimidine + CO + 5'-deoxyadenosine + formate + L-methionine + 3 H(+). Its pathway is cofactor biosynthesis; thiamine diphosphate biosynthesis. Its function is as follows. Catalyzes the synthesis of the hydroxymethylpyrimidine phosphate (HMP-P) moiety of thiamine from aminoimidazole ribotide (AIR) in a radical S-adenosyl-L-methionine (SAM)-dependent reaction. This Bacillus anthracis (strain A0248) protein is Phosphomethylpyrimidine synthase.